Consider the following 641-residue polypeptide: 1,3-beta-glucanosyltransferase PGA5 (641 aa).

The signal sequence occupies residues 1 to 23 (MTTLSTIWLFLITITAIFQLGLS). The N-linked (GlcNAc...) asparagine glycan is linked to Asn25. Cysteines 106 and 135 form a disulfide. Tyr124, Asn192, Glu193, Asp234, and Arg239 together coordinate (1,3-beta-D-glucosyl)n. Glu193 (proton donor) is an active-site residue. Intrachain disulfides connect Cys248–Cys390, Cys276–Cys307, Cys424–Cys474, Cys426–Cys528, Cys433–Cys498, and Cys451–Cys456. Glu304 serves as the catalytic Nucleophile. Position 336 (Tyr336) interacts with (1,3-beta-D-glucosyl)n. The segment at 535-613 (KEEEKEVQEE…SPKTSKSIAG (79 aa)) is disordered. The span at 571-581 (KSKEKEKGKLI) shows a compositional bias: basic and acidic residues. Acidic residues predominate over residues 582-593 (EEEEEEEEEEEE). Positions 596–610 (KTPSSGEKSPKTSKS) are enriched in polar residues. N-linked (GlcNAc...) asparagine glycosylation is present at Asn621. The GPI-anchor amidated aspartate moiety is linked to residue Asp622. Positions 623–641 (SIWKTFIEILFTCSAAILI) are cleaved as a propeptide — removed in mature form.

This sequence belongs to the glycosyl hydrolase 72 family.

It is found in the cell membrane. Functionally, splits internally a 1,3-beta-glucan molecule and transfers the newly generated reducing end (the donor) to the non-reducing end of another 1,3-beta-glucan molecule (the acceptor) forming a 1,3-beta linkage, resulting in the elongation of 1,3-beta-glucan chains in the cell wall. Involved in spore wall assembly. This chain is 1,3-beta-glucanosyltransferase PGA5 (PGA5), found in Candida albicans (strain SC5314 / ATCC MYA-2876) (Yeast).